A 140-amino-acid polypeptide reads, in one-letter code: Nucleoside diphosphate kinase (140 aa).

Residues Lys11, Phe59, Arg87, Thr93, Arg104, and Asn114 each contribute to the ATP site. His117 serves as the catalytic Pros-phosphohistidine intermediate.

The protein belongs to the NDK family. Homotetramer. Requires Mg(2+) as cofactor.

It is found in the cytoplasm. The catalysed reaction is a 2'-deoxyribonucleoside 5'-diphosphate + ATP = a 2'-deoxyribonucleoside 5'-triphosphate + ADP. It catalyses the reaction a ribonucleoside 5'-diphosphate + ATP = a ribonucleoside 5'-triphosphate + ADP. Major role in the synthesis of nucleoside triphosphates other than ATP. The ATP gamma phosphate is transferred to the NDP beta phosphate via a ping-pong mechanism, using a phosphorylated active-site intermediate. In Bartonella henselae (strain ATCC 49882 / DSM 28221 / CCUG 30454 / Houston 1) (Rochalimaea henselae), this protein is Nucleoside diphosphate kinase.